The sequence spans 644 residues: MFQDNPLLAQLKQQLHSQTPRAEGVVKATEKGFGFLEVDAQKSYFIPPPQMKKVMHGDRIIAVIHSEKERESAEPEELVEPFLTRFVGKVQGKNDRLAIVPDHPLLKDAIPCRAARGLNHEFKEGDWAVAEMRCHPLKGDRSFYAELTQYITFGDDHFVPWWVTLARHNLEKEAPDGVATEMLDEGLVREDLTALDFVTIDSASTEDMDDALFAKALPDDKLQLIVAIADPTAWIAEGSKLDKAAKIRAFTNYLPGFNIPMLPRELSDDLCSLRANEVRPVLACRMTLSADGTIEDNIEFFAATIESKAKLVYDQVSDWLENTGDWQPESEAIAEQVRLLAQICQRRGEWRHNHALVFKDRPDYRFILGEKGEVLDIVAEPRRIANRIVEEAMIAANICAARILRDKLGFGIYNVHMGFDPANADALAALLKTHGLHVDAEEVLTLDGFCKLRRELDAQPTGFLDSRIRRFQSFAEISTEPGPHFGLGLEAYATWTSPIRKYGDMINHRLLKAVIKGETATRPQDEITVQMAERRRLNRMAERDVGDWLYARFLKDKAGTDTRFAAEIVDISRGGMRVRLVDNGAIAFIPAPFLHAVRDELVCSQENGTVQIKGETVYKVTDVIDVTIAEVRMETRSIIARPVA.

The region spanning 189–516 (REDLTALDFV…NHRLLKAVIK (328 aa)) is the RNB domain. Residues 561-643 (DTRFAAEIVD…ETRSIIARPV (83 aa)) enclose the S1 motif domain.

It belongs to the RNR ribonuclease family. RNase II subfamily.

Its subcellular location is the cytoplasm. The enzyme catalyses Exonucleolytic cleavage in the 3'- to 5'-direction to yield nucleoside 5'-phosphates.. Functionally, involved in mRNA degradation. Hydrolyzes single-stranded polyribonucleotides processively in the 3' to 5' direction. The sequence is that of Exoribonuclease 2 from Shigella dysenteriae serotype 1 (strain Sd197).